A 339-amino-acid chain; its full sequence is Quinolinate synthase (339 aa).

Positions 63 and 81 each coordinate iminosuccinate. A [4Fe-4S] cluster-binding site is contributed by C126. Iminosuccinate-binding positions include 152-154 (YVN) and S169. A [4Fe-4S] cluster-binding site is contributed by C211. Residues 237 to 239 (HPE) and T254 contribute to the iminosuccinate site. C297 serves as a coordination point for [4Fe-4S] cluster.

It belongs to the quinolinate synthase family. Type 2 subfamily. It depends on [4Fe-4S] cluster as a cofactor.

The protein resides in the cytoplasm. The enzyme catalyses iminosuccinate + dihydroxyacetone phosphate = quinolinate + phosphate + 2 H2O + H(+). It functions in the pathway cofactor biosynthesis; NAD(+) biosynthesis; quinolinate from iminoaspartate: step 1/1. Catalyzes the condensation of iminoaspartate with dihydroxyacetone phosphate to form quinolinate. The polypeptide is Quinolinate synthase (Xylella fastidiosa (strain 9a5c)).